Reading from the N-terminus, the 825-residue chain is Cytosolic phospholipase A2 delta (825 aa).

In terms of domain architecture, C2 spans 14–133; the sequence is SPERLHGHPY…LPGQLLQKTF (120 aa). The Ca(2+) site is built by Asp47, Asp53, Asp103, Asp105, and Asp111. Positions 281–825 constitute a PLA2c domain; sequence DCCPKELSVR…SETRPLGVKT (545 aa). Residue 339–340 participates in substrate binding; the sequence is GG. The active-site Nucleophile is the Ser370. Catalysis depends on Asp654, which acts as the Proton acceptor.

Ca(2+) is required as a cofactor. Weakly or not expressed in most tissues. Detected in placenta of 17.5 dpc embryos.

It is found in the cytoplasm. Its subcellular location is the cytosol. The protein resides in the membrane. It catalyses the reaction a 1,2-diacyl-sn-glycero-3-phosphocholine + H2O = a 1-acyl-sn-glycero-3-phosphocholine + a fatty acid + H(+). The catalysed reaction is 1-hexadecanoyl-2-(5Z,8Z,11Z,14Z-eicosatetraenoyl)-sn-glycero-3-phosphocholine + H2O = 1-hexadecanoyl-sn-glycero-3-phosphocholine + (5Z,8Z,11Z,14Z)-eicosatetraenoate + H(+). The enzyme catalyses 1-hexadecanoyl-2-(9Z,12Z-octadecadienoyl)-sn-glycero-3-phosphocholine + H2O = (9Z,12Z)-octadecadienoate + 1-hexadecanoyl-sn-glycero-3-phosphocholine + H(+). It carries out the reaction 1-hexadecanoyl-2-(9Z-octadecenoyl)-sn-glycero-3-phosphocholine + H2O = 1-hexadecanoyl-sn-glycero-3-phosphocholine + (9Z)-octadecenoate + H(+). It catalyses the reaction 1-hexadecanoyl-2-(5Z,8Z,11Z,14Z-eicosatetraenoyl)-sn-glycero-3-phosphoethanolamine + H2O = 1-hexadecanoyl-sn-glycero-3-phosphoethanolamine + (5Z,8Z,11Z,14Z)-eicosatetraenoate + H(+). The catalysed reaction is 1-hexadecanoyl-2-(9Z,12Z-octadecadienoyl)-sn-glycero-3-phosphoethanolamine + H2O = 1-hexadecanoyl-sn-glycero-3-phosphoethanolamine + (9Z,12Z)-octadecadienoate + H(+). The enzyme catalyses 1-hexadecanoyl-sn-glycero-3-phosphocholine + H2O = sn-glycerol 3-phosphocholine + hexadecanoate + H(+). It functions in the pathway lipid metabolism; fatty acid metabolism. Stimulated by cytosolic Ca(2+). Functionally, calcium-dependent phospholipase A2 that selectively hydrolyzes glycerophospholipids in the sn-2 position. Compared to its human ortholog, may have no preference for the fatty acid found at the sn-2 position. The protein is Cytosolic phospholipase A2 delta of Mus musculus (Mouse).